A 425-amino-acid chain; its full sequence is Glucose-1-phosphate adenylyltransferase (425 aa).

Alpha-D-glucose 1-phosphate is bound by residues Tyr114, Gly179, 194–195, and Ser212; that span reads EK.

It belongs to the bacterial/plant glucose-1-phosphate adenylyltransferase family. Homotetramer.

It catalyses the reaction alpha-D-glucose 1-phosphate + ATP + H(+) = ADP-alpha-D-glucose + diphosphate. Its pathway is glycan biosynthesis; glycogen biosynthesis. Functionally, involved in the biosynthesis of ADP-glucose, a building block required for the elongation reactions to produce glycogen. Catalyzes the reaction between ATP and alpha-D-glucose 1-phosphate (G1P) to produce pyrophosphate and ADP-Glc. The sequence is that of Glucose-1-phosphate adenylyltransferase from Pectobacterium carotovorum subsp. carotovorum (strain PC1).